The chain runs to 510 residues: Inositol-3-phosphate synthase (510 aa).

NAD(+) contacts are provided by G70, G71, N72, N73, D143, I180, Q190, R193, T230, A231, N232, T233, G281, S282, D306, S309, N340, N341, D342, K355, G393, D394, D422, and S423.

Belongs to the myo-inositol 1-phosphate synthase family. NAD(+) serves as cofactor.

It localises to the cytoplasm. The protein resides in the cytosol. It is found in the nucleus. The catalysed reaction is D-glucose 6-phosphate = 1D-myo-inositol 3-phosphate. It participates in polyol metabolism; myo-inositol biosynthesis; myo-inositol from D-glucose 6-phosphate: step 1/2. In terms of biological role, key enzyme in myo-inositol biosynthesis pathway that catalyzes the conversion of glucose 6-phosphate to 1-myo-inositol 1-phosphate in a NAD-dependent manner. In Hordeum vulgare (Barley), this protein is Inositol-3-phosphate synthase.